A 72-amino-acid polypeptide reads, in one-letter code: Potassium channel toxin kappa-KTx 5.1 (72 aa).

The first 23 residues, 1-23 (MKLLPLLFVILIVCAILPDEASC), serve as a signal peptide directing secretion. The propeptide occupies 24-43 (DQSELERKEENFKDESREIV). Disulfide bonds link Cys47/Cys64 and Cys51/Cys60. Histidine amide is present on His70.

It belongs to the short scorpion toxin superfamily. Potassium channel inhibitor kappa-KTx family. Kappa-KTx 5 subfamily. Expressed by the venom gland.

It localises to the secreted. Its function is as follows. Weak blocker of potassium channels Kv1.1/KCNA1 (IC(50)=578.5 nM-9.9 uM) and Kv1.6/KCNA6 (~60% block at 30 uM of toxin). Acts by binding to the pore and occluding it. Has a voltage-dependent mode of action, which can be explained by a high content of basic residues causing repulsions at higher membrane voltages. Shows a weak interaction with muscle-type nicotinic acetylcholine receptors (nAChR), since it inhibits alpha-bungarotoxin binding to muscle-type nAChR from T.californica (IC(50)=1.4 uM). This suggests it probably weakly inhibits muscle nAChR. The mode of binding to potassium channels of this toxin differs from its homologs (including HefuTx1), since it lacks the key aromatic residue of the functional dyad. In contrast, its functionally important site is composed of a number of basic residues. This chain is Potassium channel toxin kappa-KTx 5.1, found in Heterometrus laoticus (Thai giant scorpion).